Consider the following 36-residue polypeptide: Peptide POLARIS (36 aa).

This sequence belongs to the POLARIS peptide family. In terms of tissue distribution, mostly expressed in the embryonic root from the heart stage and in the seedling primary and lateral root tips, especially in the columella initials and lateral root cap. Also detectable in aerial parts of the seedling, sepals and leaves, principally in vascular tissues of the lamina and petiole.

In terms of biological role, required for correct root growth and vascular development, probably by modulating both cell division rate in meristems and cell elongation in roots. Negative regulator of the ethylene signaling pathway that modulates microtubule cytoskeleton dynamics and auxin transport and homeostasis, and possibly cytokinin signaling, thus influencing root growth and lateral root development. This is Peptide POLARIS (PLS) from Arabidopsis thaliana (Mouse-ear cress).